The chain runs to 538 residues: ATP synthase subunit beta, mitochondrial (538 aa).

215-222 (GGAGVGKT) is an ATP binding site.

This sequence belongs to the ATPase alpha/beta chains family. As to quaternary structure, subunit of the F-type ATPase which has 2 components, CF(1) - the catalytic core - and CF(0) - the membrane proton channel. Interacts (via N-terminus) with lov-1 (via PLAT domain). In terms of tissue distribution, expressed in three categories of adult male sensory neurons: tail ray B neurons, HOB hook neuron and head cephalic (CEM) neurons.

Its subcellular location is the cell projection. The protein resides in the cilium. The protein localises to the mitochondrion. It localises to the mitochondrion inner membrane. It carries out the reaction ATP + H2O + 4 H(+)(in) = ADP + phosphate + 5 H(+)(out). Its function is as follows. Mitochondrial membrane ATP synthase (F(1)F(0) ATP synthase or Complex V) produces ATP from ADP in the presence of a proton gradient across the membrane which is generated by electron transport complexes of the respiratory chain. F-type ATPases consist of two structural domains, F(1) - containing the extramembraneous catalytic core, and F(0) - containing the membrane proton channel, linked together by a central stalk and a peripheral stalk. During catalysis, ATP synthesis in the catalytic domain of F(1) is coupled via a rotary mechanism of the central stalk subunits to proton translocation. Subunits alpha and beta form the catalytic core in F(1). Rotation of the central stalk against the surrounding subunits leads to hydrolysis of ATP in three separate catalytic sites on the beta subunits. Required during male mating behavior for the response to hermaphrodite contact, acting with lov-1 and pkd-2. May be involved in polycystin signaling. The protein is ATP synthase subunit beta, mitochondrial of Caenorhabditis elegans.